The primary structure comprises 376 residues: Tetraacyldisaccharide 4'-kinase (376 aa).

51–58 (AVGGTGKT) contributes to the ATP binding site.

Belongs to the LpxK family.

The catalysed reaction is a lipid A disaccharide + ATP = a lipid IVA + ADP + H(+). It participates in glycolipid biosynthesis; lipid IV(A) biosynthesis; lipid IV(A) from (3R)-3-hydroxytetradecanoyl-[acyl-carrier-protein] and UDP-N-acetyl-alpha-D-glucosamine: step 6/6. Functionally, transfers the gamma-phosphate of ATP to the 4'-position of a tetraacyldisaccharide 1-phosphate intermediate (termed DS-1-P) to form tetraacyldisaccharide 1,4'-bis-phosphate (lipid IVA). The chain is Tetraacyldisaccharide 4'-kinase from Bacteroides fragilis (strain YCH46).